A 306-amino-acid chain; its full sequence is D-alanine--D-alanine ligase (306 aa).

The ATP-grasp domain occupies 102–300; it reads KIVVASVGVS…YGDIVQWMVE (199 aa). Position 128–183 (128–183) interacts with ATP; sequence PMEPPYVIKPVCEGSSLGVIIVKENESVPSLNVVGSEWVYADTVIVEKYIPGRELT. 3 residues coordinate Mg(2+): Asp-253, Glu-267, and Asn-269.

It belongs to the D-alanine--D-alanine ligase family. The cofactor is Mg(2+). Mn(2+) serves as cofactor.

It localises to the cytoplasm. It carries out the reaction 2 D-alanine + ATP = D-alanyl-D-alanine + ADP + phosphate + H(+). Its pathway is cell wall biogenesis; peptidoglycan biosynthesis. Cell wall formation. This Bartonella henselae (strain ATCC 49882 / DSM 28221 / CCUG 30454 / Houston 1) (Rochalimaea henselae) protein is D-alanine--D-alanine ligase.